The chain runs to 353 residues: Polyprenal reductase 2 (353 aa).

6 helical membrane-spanning segments follow: residues 11–31 (PLLC…ALPI), 78–98 (FMHF…AIWF), 175–195 (MHIV…LSLA), 234–254 (PLLK…WGSL), 291–308 (YLAE…SGAE), and 313–335 (WFLF…NWYL).

The protein belongs to the steroid 5-alpha reductase family. Polyprenal reductase subfamily.

The protein localises to the cell membrane. The catalysed reaction is a di-trans,poly-cis-dolichal + NADP(+) = a di-trans,poly-cis-polyprenal + NADPH + H(+). It participates in protein modification; protein glycosylation. Functionally, plays a key role in early steps of protein N-linked glycosylation by being involved in the conversion of polyprenol into dolichol. Acts as a polyprenal reductase that mediates the reduction of polyprenal into dolichal in a NADP-dependent mechanism. Dolichols are required for the synthesis of dolichol-linked monosaccharides and the oligosaccharide precursor used for N-glycosylation. The sequence is that of Polyprenal reductase 2 from Oryza sativa subsp. indica (Rice).